A 505-amino-acid polypeptide reads, in one-letter code: ATP synthase subunit alpha (505 aa).

171-178 (GDRQTGKT) lines the ATP pocket.

This sequence belongs to the ATPase alpha/beta chains family. As to quaternary structure, F-type ATPases have 2 components, CF(1) - the catalytic core - and CF(0) - the membrane proton channel. CF(1) has five subunits: alpha(3), beta(3), gamma(1), delta(1), epsilon(1). CF(0) has three main subunits: a(1), b(2) and c(9-12). The alpha and beta chains form an alternating ring which encloses part of the gamma chain. CF(1) is attached to CF(0) by a central stalk formed by the gamma and epsilon chains, while a peripheral stalk is formed by the delta and b chains.

It is found in the cell inner membrane. It catalyses the reaction ATP + H2O + 4 H(+)(in) = ADP + phosphate + 5 H(+)(out). Produces ATP from ADP in the presence of a proton gradient across the membrane. The alpha chain is a regulatory subunit. The sequence is that of ATP synthase subunit alpha from Campylobacter hominis (strain ATCC BAA-381 / DSM 21671 / CCUG 45161 / LMG 19568 / NCTC 13146 / CH001A).